A 259-amino-acid chain; its full sequence is (3R)-3-hydroxyacyl-CoA dehydrogenase (259 aa).

Residues 13 to 21 (LVTGAGSGI) and 40 to 41 (DL) each bind NAD(+). Serine 58 is modified (phosphoserine). Residue 72–74 (ADV) coordinates NAD(+). Serine 154 is a binding site for substrate. The residue at position 158 (lysine 158) is an N6-succinyllysine. Tyrosine 167 acts as the Proton acceptor in catalysis. NAD(+) is bound by residues 167–171 (YAASK) and 200–202 (ITT). Lysine 171 bears the N6-succinyllysine mark.

The protein belongs to the short-chain dehydrogenases/reductases (SDR) family. In terms of assembly, heterotetramer with CBR4; contains two molecules of HSD17B8 and CBR4.

The protein resides in the mitochondrion matrix. It carries out the reaction a (3R)-3-hydroxyacyl-CoA + NAD(+) = a 3-oxoacyl-CoA + NADH + H(+). The enzyme catalyses 17beta-estradiol + NAD(+) = estrone + NADH + H(+). It catalyses the reaction testosterone + NAD(+) = androst-4-ene-3,17-dione + NADH + H(+). The catalysed reaction is 17beta-hydroxy-5alpha-androstan-3-one + NAD(+) = 5alpha-androstan-3,17-dione + NADH + H(+). It functions in the pathway steroid biosynthesis; estrogen biosynthesis. It participates in lipid metabolism; fatty acid biosynthesis. Its pathway is lipid metabolism; mitochondrial fatty acid beta-oxidation. Its function is as follows. Required for the solubility and assembly of the heterotetramer 3-ketoacyl-[acyl carrier protein] (ACP) reductase functional complex (KAR or KAR1) that forms part of the mitochondrial fatty acid synthase (mtFAS). Alpha-subunit of the KAR complex that acts as scaffold protein required for the stability of carbonyl reductase type-4 (CBR4, beta-subunit of the KAR complex) and for its 3-ketoacyl-ACP reductase activity, thereby participating in mitochondrial fatty acid biosynthesis. Catalyzes the NAD-dependent conversion of (3R)-3-hydroxyacyl-CoA into 3-ketoacyl-CoA (3-oxoacyl-CoA) with no chain length preference; this enzymatic activity is not needed for the KAR function. Prefers (3R)-3-hydroxyacyl-CoA over (3S)-3-hydroxyacyl-CoA and displays enzymatic activity only in the presence of NAD(+). Cooperates with enoyl-CoA hydratase 1 in mitochondria, together they constitute an alternative route to the auxiliary enzyme pathways for the breakdown of Z-PUFA (cis polyunsaturated fatty acid) enoyl-esters. NAD-dependent 17-beta-hydroxysteroid dehydrogenase with highest activity towards estradiol (17beta-estradiol or E2). Has very low activity towards testosterone and dihydrotestosterone (17beta-hydroxy-5alpha-androstan-3-one). Primarily an oxidative enzyme, it can switch to a reductive mode determined in the appropriate physiologic milieu and catalyze the reduction of estrone (E1) to form biologically active 17beta-estradiol. The chain is (3R)-3-hydroxyacyl-CoA dehydrogenase (HSD17B8) from Canis lupus familiaris (Dog).